The primary structure comprises 430 residues: Putative golgin subfamily A member 8D (430 aa).

A coiled-coil region spans residues 2–217 (EWKLEQSMRE…LTAQLSLMAL (216 aa)). Disordered regions lie at residues 138 to 158 (LREQEERLQEQQERLPEQEER), 217 to 239 (LPGEGHGGEHLDSEGEEAPRPMP), 290 to 331 (PITK…GVAA), and 382 to 406 (PVQGEAREGSPHDNPTAQPIVQDHQ). Residues 222 to 235 (HGGEHLDSEGEEAP) show a composition bias toward basic and acidic residues. Over residues 303-316 (PGGGHHQAGPGQGG) the composition is skewed to gly residues.

Belongs to the GOLGA8 family.

The sequence is that of Putative golgin subfamily A member 8D (GOLGA8DP) from Homo sapiens (Human).